The chain runs to 308 residues: D-alanine--D-alanine ligase (308 aa).

Positions lysine 102–glutamate 302 constitute an ATP-grasp domain. Residue proline 128 to threonine 183 coordinates ATP. Positions 252, 269, and 271 each coordinate Mg(2+).

Belongs to the D-alanine--D-alanine ligase family. Mg(2+) is required as a cofactor. Mn(2+) serves as cofactor.

The protein localises to the cytoplasm. It catalyses the reaction 2 D-alanine + ATP = D-alanyl-D-alanine + ADP + phosphate + H(+). It functions in the pathway cell wall biogenesis; peptidoglycan biosynthesis. Functionally, cell wall formation. This chain is D-alanine--D-alanine ligase, found in Brucella anthropi (strain ATCC 49188 / DSM 6882 / CCUG 24695 / JCM 21032 / LMG 3331 / NBRC 15819 / NCTC 12168 / Alc 37) (Ochrobactrum anthropi).